A 151-amino-acid polypeptide reads, in one-letter code: 3-hydroxyacyl-[acyl-carrier-protein] dehydratase FabZ (151 aa).

The active site involves H54.

Belongs to the thioester dehydratase family. FabZ subfamily.

The protein localises to the cytoplasm. The catalysed reaction is a (3R)-hydroxyacyl-[ACP] = a (2E)-enoyl-[ACP] + H2O. Involved in unsaturated fatty acids biosynthesis. Catalyzes the dehydration of short chain beta-hydroxyacyl-ACPs and long chain saturated and unsaturated beta-hydroxyacyl-ACPs. This chain is 3-hydroxyacyl-[acyl-carrier-protein] dehydratase FabZ, found in Cronobacter sakazakii (strain ATCC BAA-894) (Enterobacter sakazakii).